A 141-amino-acid polypeptide reads, in one-letter code: Hemoglobin subunit alpha (141 aa).

Residues 1–141 form the Globin domain; that stretch reads VLSAADKGHV…VSTVLTSKYR (141 aa). S3 bears the Phosphoserine mark. Residues K7 and K11 each carry the N6-succinyllysine modification. K16 is subject to N6-acetyllysine; alternate. An N6-succinyllysine; alternate modification is found at K16. A Phosphotyrosine modification is found at Y24. Residue S35 is modified to Phosphoserine. An N6-succinyllysine modification is found at K40. S49 bears the Phosphoserine mark. An O2-binding site is contributed by H58. H87 contacts heme b. At S102 the chain carries Phosphoserine. The residue at position 108 (T108) is a Phosphothreonine. The residue at position 124 (S124) is a Phosphoserine. Phosphothreonine is present on residues T134 and T137. S138 bears the Phosphoserine mark.

This sequence belongs to the globin family. As to quaternary structure, heterotetramer of two alpha chains and two beta chains. As to expression, red blood cells.

Functionally, involved in oxygen transport from the lung to the various peripheral tissues. In terms of biological role, hemopressin acts as an antagonist peptide of the cannabinoid receptor CNR1. Hemopressin-binding efficiently blocks cannabinoid receptor CNR1 and subsequent signaling. The chain is Hemoglobin subunit alpha (HBA) from Macropus giganteus (Eastern gray kangaroo).